Here is a 129-residue protein sequence, read N- to C-terminus: Small ribosomal subunit protein uS8 (129 aa).

Belongs to the universal ribosomal protein uS8 family. Part of the 30S ribosomal subunit.

Its function is as follows. One of the primary rRNA binding proteins, it binds directly to 16S rRNA central domain where it helps coordinate assembly of the platform of the 30S subunit. The sequence is that of Small ribosomal subunit protein uS8 from Methanothrix thermoacetophila (strain DSM 6194 / JCM 14653 / NBRC 101360 / PT) (Methanosaeta thermophila).